The following is a 585-amino-acid chain: Protein FAM151A (585 aa).

Residues 14–34 traverse the membrane as a helical segment; the sequence is WVFAGITCVSVVVIAAIVLAI.

This sequence belongs to the menorin family.

Its subcellular location is the membrane. This chain is Protein FAM151A (FAM151A), found in Homo sapiens (Human).